The primary structure comprises 147 residues: Small ribosomal subunit protein uS12 (147 aa).

This sequence belongs to the universal ribosomal protein uS12 family. As to quaternary structure, part of the 30S ribosomal subunit.

Its function is as follows. With S4 and S5 plays an important role in translational accuracy. Located at the interface of the 30S and 50S subunits. This Sulfurisphaera tokodaii (strain DSM 16993 / JCM 10545 / NBRC 100140 / 7) (Sulfolobus tokodaii) protein is Small ribosomal subunit protein uS12.